We begin with the raw amino-acid sequence, 429 residues long: Histidine--tRNA ligase (429 aa).

Belongs to the class-II aminoacyl-tRNA synthetase family. As to quaternary structure, homodimer.

The protein resides in the cytoplasm. The enzyme catalyses tRNA(His) + L-histidine + ATP = L-histidyl-tRNA(His) + AMP + diphosphate + H(+). This is Histidine--tRNA ligase from Streptococcus pneumoniae serotype 19F (strain G54).